The following is a 2199-amino-acid chain: DNA polymerase epsilon catalytic subunit A (2199 aa).

Zn(2+)-binding residues include cysteine 2069, cysteine 2072, cysteine 2104, and cysteine 2107. The CysA-type zinc-finger motif lies at 2069-2107 (CKQCGVHQDFDLCLHEHLWPTRDDMGTLVFSDGWSCSSC). [4Fe-4S] cluster contacts are provided by cysteine 2138, cysteine 2141, cysteine 2153, and cysteine 2155. The short motif at 2138-2155 (CSKCKTVKQWSLKERCSC) is the CysB motif element.

The protein belongs to the DNA polymerase type-B family. As to quaternary structure, heterotetramer. Consists of 4 subunits: pol2, dpb2, dpb3 and dpb4. [4Fe-4S] cluster is required as a cofactor.

It localises to the nucleus. The catalysed reaction is DNA(n) + a 2'-deoxyribonucleoside 5'-triphosphate = DNA(n+1) + diphosphate. In terms of biological role, DNA polymerase II participates in chromosomal DNA replication. The protein is DNA polymerase epsilon catalytic subunit A (pol2) of Schizosaccharomyces pombe (strain 972 / ATCC 24843) (Fission yeast).